Consider the following 309-residue polypeptide: Protease HtpX homolog (309 aa).

Helical transmembrane passes span 7-27 and 28-48; these read AILL…IGGA and SGAM…YWNS. Histidine 130 is a binding site for Zn(2+). Glutamate 131 is an active-site residue. Residue histidine 134 participates in Zn(2+) binding. A run of 2 helical transmembrane segments spans residues 145–165 and 173–193; these read VTAT…FFGG and GLGV…AMLV. A Zn(2+)-binding site is contributed by glutamate 202.

Belongs to the peptidase M48B family. It depends on Zn(2+) as a cofactor.

Its subcellular location is the cell inner membrane. This Rhodopseudomonas palustris (strain BisA53) protein is Protease HtpX homolog.